The chain runs to 248 residues: DNA-directed RNA polymerase subunit Rpo3 (248 aa).

Belongs to the archaeal Rpo3/eukaryotic RPB3 RNA polymerase subunit family. In terms of assembly, part of the RNA polymerase complex.

The protein localises to the cytoplasm. It catalyses the reaction RNA(n) + a ribonucleoside 5'-triphosphate = RNA(n+1) + diphosphate. Its function is as follows. DNA-dependent RNA polymerase (RNAP) catalyzes the transcription of DNA into RNA using the four ribonucleoside triphosphates as substrates. This chain is DNA-directed RNA polymerase subunit Rpo3, found in Halobacterium salinarum (strain ATCC 29341 / DSM 671 / R1).